Here is a 353-residue protein sequence, read N- to C-terminus: Basic membrane protein C (353 aa).

A signal peptide spans 1 to 16 (MFKRFIFITLSLLVFA). Cys-17 carries N-palmitoyl cysteine lipidation. Cys-17 carries S-diacylglycerol cysteine lipidation.

It belongs to the BMP lipoprotein family. As to quaternary structure, monomer.

The protein resides in the cell inner membrane. Its function is as follows. May be part of an ABC-type nucleoside uptake system involved in the purine salvage pathway. In Borreliella burgdorferi (strain N40) (Borrelia burgdorferi), this protein is Basic membrane protein C (bmpC).